Reading from the N-terminus, the 202-residue chain is T-cell surface glycoprotein CD3 epsilon chain (202 aa).

A signal peptide spans 1-21 (MQSRNLWRILGLCLLSVGAWG). Residues 22–122 (QDEDFKASDD…VCANCIEVNL (101 aa)) are Extracellular-facing. The Ig-like domain maps to 37-107 (PEKRFKVSIS…ADSIKEKSYL (71 aa)). A disulfide bridge links Cys-54 with Cys-96. A helical membrane pass occupies residues 123 to 143 (MAVVTIIVADICLTLGLLLMV). Topologically, residues 144–202 (YYWSKTRKANAKPVMRGTGAGSRPRGQNKEKPPPVPNPDYEPIRKGQQDLYSGLNQRGI) are cytoplasmic. Residues 156–202 (PVMRGTGAGSRPRGQNKEKPPPVPNPDYEPIRKGQQDLYSGLNQRGI) form a disordered region. The interval 170–187 (QNKEKPPPVPNPDYEPIR) is NUMB-binding region. Residues 173–200 (EKPPPVPNPDYEPIRKGQQDLYSGLNQR) enclose the ITAM domain. The tract at residues 174-181 (KPPPVPNP) is proline-rich sequence. 2 positions are modified to phosphotyrosine: Tyr-183 and Tyr-194. Polar residues predominate over residues 192–202 (DLYSGLNQRGI).

In terms of assembly, the TCR-CD3 complex is composed of a CD3D/CD3E and a CD3G/CD3E heterodimers that preferentially associate with TCRalpha and TCRbeta, respectively, to form TCRalpha/CD3E/CD3G and TCRbeta/CD3G/CD3E trimers. In turn, the hexamer interacts with CD3Z homodimer to form the TCR-CD3 complex. Alternatively, TCRalpha and TCRbeta can be replaced by TCRgamma and TCRdelta. Interacts with CD6. Interacts (via Proline-rich sequence) with NCK1; the interaction is ligand dependent but independent of tyrosine kinase activation. Post-translationally, phosphorylated on Tyr residues after T-cell receptor triggering by LCK in association with CD4/CD8.

The protein resides in the cell membrane. Part of the TCR-CD3 complex present on T-lymphocyte cell surface that plays an essential role in adaptive immune response. When antigen presenting cells (APCs) activate T-cell receptor (TCR), TCR-mediated signals are transmitted across the cell membrane by the CD3 chains CD3D, CD3E, CD3G and CD3Z. All CD3 chains contain immunoreceptor tyrosine-based activation motifs (ITAMs) in their cytoplasmic domain. Upon TCR engagement, these motifs become phosphorylated by Src family protein tyrosine kinases LCK and FYN, resulting in the activation of downstream signaling pathways. In addition of this role of signal transduction in T-cell activation, CD3E plays an essential role in correct T-cell development. Also participates in internalization and cell surface down-regulation of TCR-CD3 complexes via endocytosis sequences present in CD3E cytosolic region. In addition to its role as a TCR coreceptor, it serves as a receptor for ITPRIPL1. Ligand recognition inhibits T-cell activation by promoting interaction with NCK1, which prevents CD3E-ZAP70 interaction and blocks the ERK-NFkB signaling cascade and calcium influx. The protein is T-cell surface glycoprotein CD3 epsilon chain (CD3E) of Canis lupus familiaris (Dog).